The chain runs to 332 residues: Cysteine and histidine-rich domain-containing protein 1 (332 aa).

A2 carries the post-translational modification N-acetylalanine. An interaction with PPP5C region spans residues 2–77 (ALLCYNRGCG…KPPEPVKPEV (76 aa)). Residues C5, C10, C24, H27, C42, and C43 each contribute to the Zn(2+) site. CHORD domains follow at residues 5–64 (CYNR…KGRH) and 157–216 (CKNG…KGKH). T47 carries the phosphothreonine modification. A Phosphoserine modification is found at S51. Residues C59, H64, C157, C162, C176, H179, C194, C195, C211, and H216 each coordinate Zn(2+). The tract at residues 65–316 (NSEKPPEPVK…AEPMQWASLE (252 aa)) is interaction with HSP90AA1 and HSP90AB1. In terms of domain architecture, CS spans 227 to 316 (VVPCRHDWHQ…AEPMQWASLE (90 aa)).

As to quaternary structure, interacts with HSP90AA1, ROCK1 and ROCK2. Interacts with HSP90AB1 and PPP5C. Underexpressed in many breast and lung cancers.

Functionally, regulates centrosome duplication, probably by inhibiting the kinase activity of ROCK2. Proposed to act as co-chaperone for HSP90. May play a role in the regulation of NOD1 via a HSP90 chaperone complex. In vitro, has intrinsic chaperone activity. This function may be achieved by inhibiting association of ROCK2 with NPM1. Plays a role in ensuring the localization of the tyrosine kinase receptor EGFR to the plasma membrane, and thus ensures the subsequent regulation of EGFR activity and EGF-induced actin cytoskeleton remodeling. Involved in stress response. Prevents tumorigenesis. This is Cysteine and histidine-rich domain-containing protein 1 (CHORDC1) from Homo sapiens (Human).